Reading from the N-terminus, the 490-residue chain is Cytochrome P450 2C39 (490 aa).

Residues 1–25 form the signal peptide; that stretch reads MDLVTFLVLTLSSLILLSLWRQSCG. Position 435 (Cys-435) interacts with heme.

This sequence belongs to the cytochrome P450 family. The cofactor is heme. In terms of tissue distribution, liver.

Its subcellular location is the endoplasmic reticulum membrane. The protein localises to the microsome membrane. It catalyses the reaction an organic molecule + reduced [NADPH--hemoprotein reductase] + O2 = an alcohol + oxidized [NADPH--hemoprotein reductase] + H2O + H(+). The enzyme catalyses (5Z,8Z,11Z,14Z)-eicosatetraenoate + reduced [NADPH--hemoprotein reductase] + O2 = 11,12-epoxy-(5Z,8Z,14Z)-eicosatrienoate + oxidized [NADPH--hemoprotein reductase] + H2O + H(+). The catalysed reaction is (5Z,8Z,11Z,14Z)-eicosatetraenoate + reduced [NADPH--hemoprotein reductase] + O2 = 14,15-epoxy-(5Z,8Z,11Z)-eicosatrienoate + oxidized [NADPH--hemoprotein reductase] + H2O + H(+). It functions in the pathway lipid metabolism; arachidonate metabolism. Its function is as follows. A cytochrome P450 monooxygenase that primarily catalyzes the epoxidation of 11,12 and 14,15 double bonds of (5Z,8Z,11Z,14Z)-eicosatetraenoic acid (arachidonate) forming 11,12- and 14,15-epoxyeicosatrienoic acids (11,12- and 14,15-EET) regioisomers. Mechanistically, uses molecular oxygen inserting one oxygen atom into a substrate, and reducing the second into a water molecule, with two electrons provided by NADPH via cytochrome P450 reductase (CPR; NADPH--hemoprotein reductase). The protein is Cytochrome P450 2C39 of Mus musculus (Mouse).